Consider the following 152-residue polypeptide: D-aminoacyl-tRNA deacylase (152 aa).

The Gly-cisPro motif, important for rejection of L-amino acids motif lies at 142–143 (GP).

It belongs to the DTD family. In terms of assembly, homodimer.

Its subcellular location is the cytoplasm. The enzyme catalyses glycyl-tRNA(Ala) + H2O = tRNA(Ala) + glycine + H(+). It carries out the reaction a D-aminoacyl-tRNA + H2O = a tRNA + a D-alpha-amino acid + H(+). An aminoacyl-tRNA editing enzyme that deacylates mischarged D-aminoacyl-tRNAs. Also deacylates mischarged glycyl-tRNA(Ala), protecting cells against glycine mischarging by AlaRS. Acts via tRNA-based rather than protein-based catalysis; rejects L-amino acids rather than detecting D-amino acids in the active site. By recycling D-aminoacyl-tRNA to D-amino acids and free tRNA molecules, this enzyme counteracts the toxicity associated with the formation of D-aminoacyl-tRNA entities in vivo and helps enforce protein L-homochirality. The polypeptide is D-aminoacyl-tRNA deacylase (Paraburkholderia phytofirmans (strain DSM 17436 / LMG 22146 / PsJN) (Burkholderia phytofirmans)).